Here is a 1634-residue protein sequence, read N- to C-terminus: Phosphatidylinositol 4-phosphate 3-kinase C2 domain-containing subunit beta (1634 aa).

Residues 2–298 are interaction with GRB2; that stretch reads SSTQGNGEHW…YASRYGNRKN (297 aa). 2 disordered regions span residues 45 to 188 and 259 to 315; these read EENR…QPSD and GRGP…VGSR. The segment covering 87-112 has biased composition (polar residues); that stretch reads SDPTLNYNSLSPQEGPPNHSTSQGPQ. Residues 176–187 are compositionally biased toward low complexity; that stretch reads GSPSSSKISQPS. Over residues 259 to 270 the composition is skewed to basic and acidic residues; that stretch reads GRGPLDFSKDTS. In terms of domain architecture, PI3K-RBD spans 375–463; sequence EVNLKVTVLC…DIDIRLQLME (89 aa). The C2 PI3K-type domain maps to 635 to 786; sequence VYATHRIPII…DSVILQIDFP (152 aa). Positions 805-981 constitute a PIK helical domain; the sequence is RYEFGSLREE…QYLLAALLCC (177 aa). Residues 1050 to 1328 form the PI3K/PI4K catalytic domain; sequence VPRDCSYFNS…LIESSLGSVA (279 aa). A G-loop region spans residues 1056–1062; sequence YFNSNAV. The catalytic loop stretch occupies residues 1192–1200; sequence GICDRHNDN. The segment at 1211–1237 is activation loop; the sequence is HIDFGRFLGHAQMFGNIKRDRAPFVFT. The region spanning 1365 to 1481 is the PX domain; it reads GRISDVFLCR…TFFHPLPRDE (117 aa). The C2 domain occupies 1504–1624; sequence VGGEVKLSIS…DLAQEKTGWF (121 aa).

Belongs to the PI3/PI4-kinase family. In terms of assembly, part of a complex with ERBB2 and EGFR. Part of a complex with phosphorylated EGFR and GRB2. Interacts with phosphorylated EGFR and PDGFR, maybe indirectly. Interacts with GRB2. It depends on Ca(2+) as a cofactor. Mg(2+) is required as a cofactor. The cofactor is Mn(2+). As to expression, expressed in columnar and transitional epithelia, mononuclear cells, and ganglion cells (at protein level). Widely expressed, with highest levels in thymus and placenta and lowest in peripheral blood, skeletal muscle and kidney.

Its subcellular location is the microsome. The protein resides in the cell membrane. The protein localises to the cytoplasm. It is found in the cytosol. It localises to the nucleus. Its subcellular location is the endoplasmic reticulum. The catalysed reaction is a 1,2-diacyl-sn-glycero-3-phospho-(1D-myo-inositol 4-phosphate) + ATP = a 1,2-diacyl-sn-glycero-3-phospho-(1D-myo-inositol-3,4-bisphosphate) + ADP + H(+). The enzyme catalyses a 1,2-diacyl-sn-glycero-3-phospho-(1D-myo-inositol) + ATP = a 1,2-diacyl-sn-glycero-3-phospho-(1D-myo-inositol-3-phosphate) + ADP + H(+). Its activity is regulated as follows. Activated by GRB2. Its function is as follows. Phosphorylates PtdIns and PtdIns4P with a preference for PtdIns. Does not phosphorylate PtdIns(4,5)P2. May be involved in EGF and PDGF signaling cascades. This is Phosphatidylinositol 4-phosphate 3-kinase C2 domain-containing subunit beta (PIK3C2B) from Homo sapiens (Human).